A 62-amino-acid chain; its full sequence is uncharacterized protein (62 aa).

An N-terminal signal peptide occupies residues methionine 1–glycine 19.

This is an uncharacterized protein from Lepidoptera (butterflies and moths).